A 429-amino-acid polypeptide reads, in one-letter code: 3-phosphoshikimate 1-carboxyvinyltransferase (429 aa).

3 residues coordinate 3-phosphoshikimate: K22, S23, and R27. K22 provides a ligand contact to phosphoenolpyruvate. Phosphoenolpyruvate contacts are provided by G93 and R122. Positions 168, 169, 170, 196, 311, and 338 each coordinate 3-phosphoshikimate. Q170 contacts phosphoenolpyruvate. The Proton acceptor role is filled by D311. Residues R342 and R384 each contribute to the phosphoenolpyruvate site.

The protein belongs to the EPSP synthase family. Monomer.

The protein localises to the cytoplasm. The catalysed reaction is 3-phosphoshikimate + phosphoenolpyruvate = 5-O-(1-carboxyvinyl)-3-phosphoshikimate + phosphate. Its pathway is metabolic intermediate biosynthesis; chorismate biosynthesis. Its function is as follows. Catalyzes the transfer of the enolpyruvyl moiety of phosphoenolpyruvate (PEP) to the 5-hydroxyl of shikimate-3-phosphate (S3P) to produce enolpyruvyl shikimate-3-phosphate and inorganic phosphate. In Methanocaldococcus jannaschii (strain ATCC 43067 / DSM 2661 / JAL-1 / JCM 10045 / NBRC 100440) (Methanococcus jannaschii), this protein is 3-phosphoshikimate 1-carboxyvinyltransferase.